A 221-amino-acid polypeptide reads, in one-letter code: Probable transaldolase (221 aa).

Residue Lys83 is the Schiff-base intermediate with substrate of the active site.

Belongs to the transaldolase family. Type 3B subfamily.

The protein resides in the cytoplasm. It carries out the reaction D-sedoheptulose 7-phosphate + D-glyceraldehyde 3-phosphate = D-erythrose 4-phosphate + beta-D-fructose 6-phosphate. It functions in the pathway carbohydrate degradation; pentose phosphate pathway; D-glyceraldehyde 3-phosphate and beta-D-fructose 6-phosphate from D-ribose 5-phosphate and D-xylulose 5-phosphate (non-oxidative stage): step 2/3. Functionally, transaldolase is important for the balance of metabolites in the pentose-phosphate pathway. The polypeptide is Probable transaldolase (Petrotoga mobilis (strain DSM 10674 / SJ95)).